The sequence spans 482 residues: CBL-interacting serine/threonine-protein kinase 23 (482 aa).

Residues 1–25 are compositionally biased toward low complexity; the sequence is MASRTTPSRSTPSRSTPSGSSSGGR. A disordered region spans residues 1-29; it reads MASRTTPSRSTPSRSTPSGSSSGGRTRVG. Residues 31–286 form the Protein kinase domain; the sequence is YELGRTLGEG…FAEVIENEWF (256 aa). ATP-binding positions include 37 to 45 and lysine 60; that span reads LGEGTFAKV. Aspartate 154 functions as the Proton acceptor in the catalytic mechanism. Residues 172–201 form an activation loop region; sequence DFGLSALPQQVREDGLLHTTCGTPNYVAPE. Phosphoserine is present on serine 176. At threonine 190 the chain carries Phosphothreonine. Residues 328–352 enclose the NAF domain; it reads KTPVTMNAFELISTSQGLNLGSLFE. A PPI region spans residues 359-388; sequence KRKTRFTSKSSANEIVTKIEAAAAPMGFDV. Residues 459 to 482 form a disordered region; sequence KEEGTDGGGTNGAMANRTIAKQST.

This sequence belongs to the protein kinase superfamily. CAMK Ser/Thr protein kinase family. SNF1 subfamily. As to quaternary structure, part of a K(+)-channel calcium-sensing kinase/phosphatase complex composed by a calcium sensor CBL (CBL1, CBL2, CBL3 or CBL9), a kinase CIPK (CIPK6, CIPK16 or CIPK23), a phosphatase PP2C (AIP1) and a K(+)-channel (AKT1). Interacts with AKT1, CBL1, CBL2, CBL3, CBL5, CBL8, CBL9 and NRT1.1. It depends on Mn(2+) as a cofactor. In terms of processing, autophosphorylated. In seedlings, mostly in vascular bundles, and in roots, especially in cortex and endodermis cells. In adult plants, mostly expressed in flowers, and, to a lower extent, in roots, leaves, stems and siliques, particularly in vascular tissues. Also detected in guard cells and root hairs.

Its subcellular location is the cell membrane. It carries out the reaction L-seryl-[protein] + ATP = O-phospho-L-seryl-[protein] + ADP + H(+). The catalysed reaction is L-threonyl-[protein] + ATP = O-phospho-L-threonyl-[protein] + ADP + H(+). CIPK serine-threonine protein kinases interact with CBL proteins. Binding of a CBL protein to the regulatory NAF domain of CIPK protein leads to activation of the kinase in a calcium-dependent manner. Downstream of CBL1, CBL2, CBL3 and CBL9, regulates by phosphorylation the K(+) conductance and uptake of AKT1 in low K(+) condition, in response to calcium signaling and during the stomatal opening regulation by monitoring the turgor pressure in guard cells. In response to low nitrate concentration, phosphorylates NRT1.1, switching it from a low-affinity nitrate transporter to a high-affinity transporter. Confers tolerance to low potassium conditions. Involved in drought sensitivity and leaf transpiration. This is CBL-interacting serine/threonine-protein kinase 23 (CIPK23) from Arabidopsis thaliana (Mouse-ear cress).